The following is a 618-amino-acid chain: Leucine aminopeptidase 2 (618 aa).

A peptide-binding positions include 139–141 and 271–276; these read QCQ and PYGGME. Histidine 300 contacts Zn(2+). Residue glutamate 301 is the Proton acceptor of the active site. Zn(2+) contacts are provided by histidine 304 and glutamate 323. Catalysis depends on tyrosine 388, which acts as the Proton donor.

This sequence belongs to the peptidase M1 family. Zn(2+) is required as a cofactor.

Its subcellular location is the cytoplasm. The protein localises to the nucleus. The enzyme catalyses an epoxide + H2O = an ethanediol. In terms of biological role, aminopeptidase that preferentially cleaves di- and tripeptides. Also has low epoxide hydrolase activity (in vitro). Can hydrolyze the epoxide leukotriene LTA(4) but it forms preferentially 5,6-dihydroxy-7,9,11,14-eicosatetraenoic acid rather than the cytokine leukotriene B(4) as the product compared to the homologous mammalian enzyme (in vitro). The chain is Leucine aminopeptidase 2 from Aspergillus niger (strain ATCC MYA-4892 / CBS 513.88 / FGSC A1513).